The primary structure comprises 371 residues: Protein NDRG2 (371 aa).

A disordered region spans residues 1–21; sequence MAELQEVQITEEKPLLPGQTP. Ala2 bears the N-acetylalanine mark. A Phosphothreonine modification is found at Thr20. Phosphoserine occurs at positions 326 and 328. Phosphothreonine is present on Thr330. Ser332 is modified (phosphoserine). Thr334 carries the phosphothreonine modification. Residues 334-371 are disordered; the sequence is TSAASVDGNRSRSRTLSQSSESGTLSSGPPGHTMEVSC. 3 positions are modified to phosphoserine: Ser335, Ser338, and Ser344. The span at 347 to 361 shows a compositional bias: low complexity; sequence RTLSQSSESGTLSSG. At Thr348 the chain carries Phosphothreonine. Phosphoserine occurs at positions 350, 352, 353, and 355. Residue Thr357 is modified to Phosphothreonine. Ser370 bears the Phosphoserine mark.

It belongs to the NDRG family. In terms of assembly, interacts with CTNNB1. In terms of tissue distribution, highly expressed in brain, heart, skeletal muscle and salivary gland, and moderately in kidney and liver. Expressed in dendritic cells, but not in other blood cells. Expression levels are low in pancreatic and liver cancer tissues; absent in meningioma. Expressed in low-grade gliomas but present at low levels in glioblastoma. Isoform 1 and isoform 2 are present in brain neurons and up-regulated in Alzheimer disease (at protein level).

The protein resides in the cytoplasm. The protein localises to the perinuclear region. Its subcellular location is the cell projection. It is found in the growth cone. Contributes to the regulation of the Wnt signaling pathway. Down-regulates CTNNB1-mediated transcriptional activation of target genes, such as CCND1, and may thereby act as tumor suppressor. May be involved in dendritic cell and neuron differentiation. The chain is Protein NDRG2 (NDRG2) from Homo sapiens (Human).